A 154-amino-acid polypeptide reads, in one-letter code: Myoglobin (154 aa).

A Globin domain is found at 2 to 148 (VLTDAEWHLV…FRKDIAAKYK (147 aa)). Histidine 65 lines the nitrite pocket. Position 65 (histidine 65) interacts with O2. At threonine 68 the chain carries Phosphothreonine. Histidine 94 lines the heme b pocket.

It belongs to the globin family. As to quaternary structure, monomeric.

The protein resides in the cytoplasm. Its subcellular location is the sarcoplasm. It carries out the reaction Fe(III)-heme b-[protein] + nitric oxide + H2O = Fe(II)-heme b-[protein] + nitrite + 2 H(+). The catalysed reaction is H2O2 + AH2 = A + 2 H2O. Functionally, monomeric heme protein which primary function is to store oxygen and facilitate its diffusion within muscle tissues. Reversibly binds oxygen through a pentacoordinated heme iron and enables its timely and efficient release as needed during periods of heightened demand. Depending on the oxidative conditions of tissues and cells, and in addition to its ability to bind oxygen, it also has a nitrite reductase activity whereby it regulates the production of bioactive nitric oxide. Under stress conditions, like hypoxia and anoxia, it also protects cells against reactive oxygen species thanks to its pseudoperoxidase activity. This chain is Myoglobin (MB), found in Balaenoptera physalus (Fin whale).